A 181-amino-acid polypeptide reads, in one-letter code: Large ribosomal subunit protein uL6 (181 aa).

Belongs to the universal ribosomal protein uL6 family. In terms of assembly, part of the 50S ribosomal subunit.

In terms of biological role, this protein binds to the 23S rRNA, and is important in its secondary structure. It is located near the subunit interface in the base of the L7/L12 stalk, and near the tRNA binding site of the peptidyltransferase center. The protein is Large ribosomal subunit protein uL6 of Lawsonia intracellularis (strain PHE/MN1-00).